The sequence spans 213 residues: ATP phosphoribosyltransferase (213 aa).

It belongs to the ATP phosphoribosyltransferase family. Short subfamily. In terms of assembly, heteromultimer composed of HisG and HisZ subunits.

The protein resides in the cytoplasm. The enzyme catalyses 1-(5-phospho-beta-D-ribosyl)-ATP + diphosphate = 5-phospho-alpha-D-ribose 1-diphosphate + ATP. It functions in the pathway amino-acid biosynthesis; L-histidine biosynthesis; L-histidine from 5-phospho-alpha-D-ribose 1-diphosphate: step 1/9. Catalyzes the condensation of ATP and 5-phosphoribose 1-diphosphate to form N'-(5'-phosphoribosyl)-ATP (PR-ATP). Has a crucial role in the pathway because the rate of histidine biosynthesis seems to be controlled primarily by regulation of HisG enzymatic activity. The chain is ATP phosphoribosyltransferase from Anoxybacillus flavithermus (strain DSM 21510 / WK1).